The chain runs to 515 residues: 2,3-bisphosphoglycerate-independent phosphoglycerate mutase (515 aa).

Mn(2+) contacts are provided by Asp-14 and Ser-64. The Phosphoserine intermediate role is filled by Ser-64. Residues His-125, 155-156 (RD), Arg-187, Arg-193, 263-266 (RADR), and Lys-337 each bind substrate. The Mn(2+) site is built by Asp-404, His-408, Asp-445, His-446, and His-464.

The protein belongs to the BPG-independent phosphoglycerate mutase family. In terms of assembly, monomer. It depends on Mn(2+) as a cofactor.

It carries out the reaction (2R)-2-phosphoglycerate = (2R)-3-phosphoglycerate. It functions in the pathway carbohydrate degradation; glycolysis; pyruvate from D-glyceraldehyde 3-phosphate: step 3/5. In terms of biological role, catalyzes the interconversion of 2-phosphoglycerate and 3-phosphoglycerate. This Pseudomonas aeruginosa (strain ATCC 15692 / DSM 22644 / CIP 104116 / JCM 14847 / LMG 12228 / 1C / PRS 101 / PAO1) protein is 2,3-bisphosphoglycerate-independent phosphoglycerate mutase.